Here is a 621-residue protein sequence, read N- to C-terminus: Glutathione-regulated potassium-efflux system protein KefC (621 aa).

The next 13 helical transmembrane spans lie at 4–24 (HTLI…PIAV), 26–46 (LGLG…PWAL), 54–74 (AILH…GLEL), 90–110 (GALQ…LLGL), 114–134 (VAEL…MQAM), 149–169 (FAVL…IPLL), 178–198 (LMAF…VVVL), 218–237 (VFSA…LEEV), 238–257 (GLSM…SSEY), 270–290 (GLLL…GTLV), 294–314 (LRIV…LWLI), 326–346 (RWFA…FGAA), and 359–379 (ALTL…VLLT). In terms of domain architecture, RCK N-terminal spans 399–518 (QPRVIVAGFG…AGVEAPERET (120 aa)). The segment at 598 to 621 (GWQGTEEGRHTGDIADEPENKPSA) is disordered.

This sequence belongs to the monovalent cation:proton antiporter 2 (CPA2) transporter (TC 2.A.37) family. KefC subfamily. In terms of assembly, homodimer. Interacts with the regulatory subunit KefF.

It localises to the cell inner membrane. Pore-forming subunit of a potassium efflux system that confers protection against electrophiles. Catalyzes K(+)/H(+) antiport. The protein is Glutathione-regulated potassium-efflux system protein KefC of Klebsiella pneumoniae subsp. pneumoniae (strain ATCC 700721 / MGH 78578).